A 295-amino-acid chain; its full sequence is GTPase Era (295 aa).

Residues 5–172 form the Era-type G domain; it reads YCGYAAIIGR…EQAVHQLMPE (168 aa). The interval 13 to 20 is G1; the sequence is GRPNVGKS. Residue 13 to 20 coordinates GTP; it reads GRPNVGKS. A G2 region spans residues 39-43; it reads QTTRY. The interval 60-63 is G3; the sequence is DTPG. Residues 60-64 and 121-124 contribute to the GTP site; these read DTPGL and NKVD. Residues 121-124 are G4; the sequence is NKVD. Residues 151-153 are G5; the sequence is LSA. The region spanning 203-279 is the KH type-2 domain; it reads LGQEIPYSLA…FLQLWVKVKS (77 aa).

It belongs to the TRAFAC class TrmE-Era-EngA-EngB-Septin-like GTPase superfamily. Era GTPase family. As to quaternary structure, monomer.

It localises to the cytoplasm. It is found in the cell inner membrane. In terms of biological role, an essential GTPase that binds both GDP and GTP, with rapid nucleotide exchange. Plays a role in 16S rRNA processing and 30S ribosomal subunit biogenesis and possibly also in cell cycle regulation and energy metabolism. This Coxiella burnetii (strain CbuK_Q154) (Coxiella burnetii (strain Q154)) protein is GTPase Era.